We begin with the raw amino-acid sequence, 233 residues long: Large ribosomal subunit protein uL1 (233 aa).

It belongs to the universal ribosomal protein uL1 family. In terms of assembly, part of the 50S ribosomal subunit.

Its function is as follows. Binds directly to 23S rRNA. The L1 stalk is quite mobile in the ribosome, and is involved in E site tRNA release. Protein L1 is also a translational repressor protein, it controls the translation of the L11 operon by binding to its mRNA. The sequence is that of Large ribosomal subunit protein uL1 from Shewanella baltica (strain OS185).